We begin with the raw amino-acid sequence, 597 residues long: Exochitinase 1 (597 aa).

The segment at residues 1–29 (MDRFRPLAVLIAAALTLSGTTALSSAARA) is a signal peptide (or 32). The Fibronectin type-III domain occupies 172–253 (PPTGLRTGSV…ATVTATTAPG (82 aa)). A GH18 domain is found at 264 to 597 (HALVGYLHAS…FQRTFDGYFG (334 aa)). Glu384 serves as the catalytic Proton donor.

It belongs to the glycosyl hydrolase 18 family. Chitinase class II subfamily. In terms of processing, the N-terminus is blocked.

It carries out the reaction Random endo-hydrolysis of N-acetyl-beta-D-glucosaminide (1-&gt;4)-beta-linkages in chitin and chitodextrins.. Inhibited by the pseudosugar allosamidin A. Its function is as follows. Exochitinase that generates exclusively chitobiose from chitotetraose, chitohexaose, and colloidal high-molecular mass chitin. In Streptomyces olivaceoviridis (Streptomyces corchorusii), this protein is Exochitinase 1 (chi01).